The primary structure comprises 159 residues: Phosphopantetheine adenylyltransferase (159 aa).

Threonine 10 provides a ligand contact to substrate. ATP is bound by residues 10–11 (TF) and histidine 18. Lysine 42, methionine 74, and arginine 88 together coordinate substrate. ATP contacts are provided by residues 89–91 (GLR), glutamate 99, and 124–130 (WSFISSS).

It belongs to the bacterial CoaD family. In terms of assembly, homohexamer. The cofactor is Mg(2+).

Its subcellular location is the cytoplasm. It carries out the reaction (R)-4'-phosphopantetheine + ATP + H(+) = 3'-dephospho-CoA + diphosphate. It participates in cofactor biosynthesis; coenzyme A biosynthesis; CoA from (R)-pantothenate: step 4/5. Functionally, reversibly transfers an adenylyl group from ATP to 4'-phosphopantetheine, yielding dephospho-CoA (dPCoA) and pyrophosphate. The polypeptide is Phosphopantetheine adenylyltransferase (Yersinia pseudotuberculosis serotype I (strain IP32953)).